The primary structure comprises 104 residues: MKVHKGDMVLVISGPDKGAKGQVIAAFPKTEKVLVEGVNRIKKHVANSAPERGAESGGIVTQEAPIHVSNVMVIDSDGNPTRVGYRFDENGKKVRVSRRNGKDI.

Positions 82–104 (RVGYRFDENGKKVRVSRRNGKDI) are disordered. The span at 93–104 (KVRVSRRNGKDI) shows a compositional bias: basic residues.

Belongs to the universal ribosomal protein uL24 family. As to quaternary structure, part of the 50S ribosomal subunit.

Its function is as follows. One of two assembly initiator proteins, it binds directly to the 5'-end of the 23S rRNA, where it nucleates assembly of the 50S subunit. One of the proteins that surrounds the polypeptide exit tunnel on the outside of the subunit. This chain is Large ribosomal subunit protein uL24, found in Corynebacterium glutamicum (strain R).